A 363-amino-acid chain; its full sequence is Phosphoserine aminotransferase (363 aa).

Arg-42 lines the L-glutamate pocket. Residues 76 to 77, Trp-102, Thr-156, Asp-175, and Gln-198 contribute to the pyridoxal 5'-phosphate site; that span reads GR. The residue at position 199 (Lys-199) is an N6-(pyridoxal phosphate)lysine. 240–241 provides a ligand contact to pyridoxal 5'-phosphate; it reads NT.

The protein belongs to the class-V pyridoxal-phosphate-dependent aminotransferase family. SerC subfamily. In terms of assembly, homodimer. Requires pyridoxal 5'-phosphate as cofactor.

It localises to the cytoplasm. The enzyme catalyses O-phospho-L-serine + 2-oxoglutarate = 3-phosphooxypyruvate + L-glutamate. It catalyses the reaction 4-(phosphooxy)-L-threonine + 2-oxoglutarate = (R)-3-hydroxy-2-oxo-4-phosphooxybutanoate + L-glutamate. The protein operates within amino-acid biosynthesis; L-serine biosynthesis; L-serine from 3-phospho-D-glycerate: step 2/3. It participates in cofactor biosynthesis; pyridoxine 5'-phosphate biosynthesis; pyridoxine 5'-phosphate from D-erythrose 4-phosphate: step 3/5. Functionally, catalyzes the reversible conversion of 3-phosphohydroxypyruvate to phosphoserine and of 3-hydroxy-2-oxo-4-phosphonooxybutanoate to phosphohydroxythreonine. This Shewanella baltica (strain OS223) protein is Phosphoserine aminotransferase.